We begin with the raw amino-acid sequence, 382 residues long: Histidinol-phosphate aminotransferase (382 aa).

Lys215 carries the N6-(pyridoxal phosphate)lysine modification. Positions Asn363 to Ile382 are disordered.

This sequence belongs to the class-II pyridoxal-phosphate-dependent aminotransferase family. Histidinol-phosphate aminotransferase subfamily. As to quaternary structure, homodimer. Requires pyridoxal 5'-phosphate as cofactor.

It carries out the reaction L-histidinol phosphate + 2-oxoglutarate = 3-(imidazol-4-yl)-2-oxopropyl phosphate + L-glutamate. Its pathway is amino-acid biosynthesis; L-histidine biosynthesis; L-histidine from 5-phospho-alpha-D-ribose 1-diphosphate: step 7/9. This chain is Histidinol-phosphate aminotransferase, found in Yersinia pseudotuberculosis serotype O:3 (strain YPIII).